We begin with the raw amino-acid sequence, 444 residues long: Mitogen-activated protein kinase mpk-1 (444 aa).

Polar residues-rich tracts occupy residues 1–17 (MPTW…TTRN) and 24–56 (GHPQ…HVRQ). Residues 1 to 56 (MPTWIPNNLCAQPTTRNAKPPSNGHPQATQQQSAPGSLAYRNSSNIPNGATNHVRQ) form a disordered region. The region spanning 96 to 384 (YVNLSYIGEG…IEQALAHPYL (289 aa)) is the Protein kinase domain. Residues 102 to 110 (IGEGAYGMV) and Lys-125 each bind ATP. The active-site Proton acceptor is the Asp-220. Phosphothreonine is present on Thr-256. The TXY motif lies at 256-258 (TEY). Tyr-258 is modified (phosphotyrosine).

The protein belongs to the protein kinase superfamily. CMGC Ser/Thr protein kinase family. MAP kinase subfamily. As to quaternary structure, isoform a interacts with gck-1 (via N-terminus). It depends on Mg(2+) as a cofactor. In terms of processing, isoform a is phosphorylated at the pachytene stage during oogenesis and is negatively regulated by gck-1. Isoform b is phosphorylated in proximal oocytes. In terms of tissue distribution, expressed in cells lining the rectum. Isoform a is expressed in nervous system, body wall muscles and posterior intestine. Isoform b expression may be restricted to germline.

It catalyses the reaction L-seryl-[protein] + ATP = O-phospho-L-seryl-[protein] + ADP + H(+). It carries out the reaction L-threonyl-[protein] + ATP = O-phospho-L-threonyl-[protein] + ADP + H(+). Its activity is regulated as follows. Activated by dual phosphorylation at Thr-256 and Tyr-258. May be inactivated by lip-1-mediated dephosphorylation. In terms of biological role, functions in let-60 Ras signaling pathway; acts downstream of lin-45 raf kinase, but before the lin-1 gene product in controlling vulval cell differentiation. Plays a negative role in proximal germline proliferation in the mitotic zone. Required for progression of developing oocytes through the pachytene stage, perhaps acting after efl-1/dpl-1-mediated gene activation and before gld-1 down-regulation. May play a role in global X chromosome reactivation or be indirectly required for progression of germ cells through meiosis to the point where X reactivation occurs. In oocytes, inhibits the activity of the chloride channel clh-3, likely by activating gck-3. Plays a role in response to M.nematophilum-mediated bacterial infection by promoting tail swelling and preventing constipation. Involved in fluid homeostasis. In addition, involved in the up-regulation of lysozyme ilys-3 expression in the intestine in responses to M.nematophilum-mediated bacterial infection. By phosphorylating transcription factor skn-1 (isoform c) may play a role in increasing life span downstream of lin-45, let-60 and mek-2. By up-regulating cep-1 and down-regulating gld-1 expression in the late pachytene stage, plays a role in germline apoptosis in response to DNA damage. Regulates egl-1 expression in response to DNA damage, probably upstream of cep-1. Suppresses germline tumor formation by preventing the dedifferentiation of secondary spermatocytes probably upstream of rskn-1. The polypeptide is Mitogen-activated protein kinase mpk-1 (mpk-1) (Caenorhabditis elegans).